A 154-amino-acid polypeptide reads, in one-letter code: Probable chemoreceptor glutamine deamidase CheD (154 aa).

It belongs to the CheD family.

The catalysed reaction is L-glutaminyl-[protein] + H2O = L-glutamyl-[protein] + NH4(+). Its function is as follows. Probably deamidates glutamine residues to glutamate on methyl-accepting chemotaxis receptors (MCPs), playing an important role in chemotaxis. The sequence is that of Probable chemoreceptor glutamine deamidase CheD from Methanococcus maripaludis (strain C6 / ATCC BAA-1332).